We begin with the raw amino-acid sequence, 607 residues long: Dolichyl-diphosphooligosaccharide--protein glycosyltransferase subunit 1 (607 aa).

The first 23 residues, 1–23, serve as a signal peptide directing secretion; the sequence is MEAPAAGLFLLLLLGTWAPAPGS. The Lumenal segment spans residues 24-438; sequence ASSEAPPLIN…TFNKVLMLQE (415 aa). At lysine 187 the chain carries N6-acetyllysine. Residue asparagine 299 is glycosylated (N-linked (GlcNAc...) asparagine). The chain crosses the membrane as a helical span at residues 439–457; that stretch reads PLLVVAAFYILFFTVIIYV. The Cytoplasmic portion of the chain corresponds to 458-607; sequence RLDFSITKDP…TKIDHILDAL (150 aa). Lysine 538 carries the post-translational modification N6-acetyllysine; alternate. Residue lysine 538 forms a Glycyl lysine isopeptide (Lys-Gly) (interchain with G-Cter in SUMO2); alternate linkage.

Belongs to the OST1 family. In terms of assembly, component of the oligosaccharyltransferase (OST) complex. OST exists in two different complex forms which contain common core subunits RPN1, RPN2, OST48, OST4, DAD1 and TMEM258, either STT3A or STT3B as catalytic subunits, and form-specific accessory subunits. STT3A complex assembly occurs through the formation of 3 subcomplexes. Subcomplex 1 contains RPN1 and TMEM258, subcomplex 2 contains the STT3A-specific subunits STT3A, DC2/OSTC, and KCP2 as well as the core subunit OST4, and subcomplex 3 contains RPN2, DAD1, and OST48. The STT3A complex can form stable complexes with the Sec61 complex or with both the Sec61 and TRAP complexes. Interacts with TMEM35A/NACHO. In terms of processing, ubiquitinated by the ECS(ASB11) complex. Ubiquitinated by RNF128, leading to degradation in a proteasome/lysosome-dependent manner. Post-translationally, ufmylated by UFL1 in response to endoplasmic reticulum stress, promoting reticulophagy of endoplasmic reticulum sheets. Expressed in all tissues tested.

It localises to the endoplasmic reticulum membrane. The protein resides in the melanosome. The protein operates within protein modification; protein glycosylation. In terms of biological role, subunit of the oligosaccharyl transferase (OST) complex that catalyzes the initial transfer of a defined glycan (Glc(3)Man(9)GlcNAc(2) in eukaryotes) from the lipid carrier dolichol-pyrophosphate to an asparagine residue within an Asn-X-Ser/Thr consensus motif in nascent polypeptide chains, the first step in protein N-glycosylation. N-glycosylation occurs cotranslationally and the complex associates with the Sec61 complex at the channel-forming translocon complex that mediates protein translocation across the endoplasmic reticulum (ER). All subunits are required for a maximal enzyme activity. This Homo sapiens (Human) protein is Dolichyl-diphosphooligosaccharide--protein glycosyltransferase subunit 1.